Here is a 341-residue protein sequence, read N- to C-terminus: Pyrophosphate--fructose 6-phosphate 1-phosphotransferase (341 aa).

Glycine 10 contributes to the diphosphate binding site. Glutamate 103 lines the Mg(2+) pocket. Substrate is bound by residues 125 to 127 (TID), arginine 162, 169 to 171 (MGR), glutamate 221, arginine 265, and 271 to 274 (HVQR). Aspartate 127 acts as the Proton acceptor in catalysis.

It belongs to the phosphofructokinase type A (PFKA) family. Mixed-substrate PFK group III subfamily. As to quaternary structure, homodimer or homotetramer. The cofactor is Mg(2+).

It is found in the cytoplasm. It carries out the reaction beta-D-fructose 6-phosphate + diphosphate = beta-D-fructose 1,6-bisphosphate + phosphate + H(+). It functions in the pathway carbohydrate degradation; glycolysis; D-glyceraldehyde 3-phosphate and glycerone phosphate from D-glucose: step 3/4. Its activity is regulated as follows. Non-allosteric. Catalyzes the phosphorylation of D-fructose 6-phosphate, the first committing step of glycolysis. Uses inorganic phosphate (PPi) as phosphoryl donor instead of ATP like common ATP-dependent phosphofructokinases (ATP-PFKs), which renders the reaction reversible, and can thus function both in glycolysis and gluconeogenesis. Consistently, PPi-PFK can replace the enzymes of both the forward (ATP-PFK) and reverse (fructose-bisphosphatase (FBPase)) reactions. This Amycolatopsis mediterranei (strain S699) (Nocardia mediterranei) protein is Pyrophosphate--fructose 6-phosphate 1-phosphotransferase.